Consider the following 202-residue polypeptide: Remorin 1.4 (202 aa).

A compositionally biased stretch (basic and acidic residues) spans 1–10 (MAEEEPKKVT). Positions 1 to 79 (MAEEEPKKVT…VEEEKKEGSV (79 aa)) are disordered. Positions 25-39 (EKPAAAADVAPQEKP) are enriched in low complexity. The span at 40–50 (VAPPPVLPSPA) shows a compositional bias: pro residues. Over residues 68–79 (KEVEEEKKEGSV) the composition is skewed to basic and acidic residues. Positions 123–169 (ENNKKAAVEAELKKMEEQLEKKKAEYVEQMKNKIAQIHKEAEEKRAM) form a coiled coil.

This sequence belongs to the remorin family.

This Arabidopsis thaliana (Mouse-ear cress) protein is Remorin 1.4.